The chain runs to 263 residues: Aquaglyceroporin (263 aa).

Residues 1–22 (MDQFVFSGGSEGGGELGGDRER) are disordered. A run of 6 helical transmembrane segments spans residues 41-61 (KYFC…FGLA), 64-84 (GGAQ…ITLF), 113-133 (LCYV…GYGI), 157-177 (VIPT…YGVM), 180-200 (LTVP…GATM), and 222-242 (VAAL…AFLG).

This sequence belongs to the MIP/aquaporin (TC 1.A.8) family. In terms of assembly, multimer.

It localises to the vacuole membrane. The enzyme catalyses H2O(in) = H2O(out). It carries out the reaction glycerol(in) = glycerol(out). The catalysed reaction is urea(in) = urea(out). In terms of biological role, mediates water and glycerol transport across cell membranes. Permeable to selected sugar alcohols of up to five carbons and urea. Permeable to methylamine/methylammonium. This is Aquaglyceroporin from Toxoplasma gondii (strain ATCC 50611 / Me49).